A 456-amino-acid polypeptide reads, in one-letter code: Palmitoyltransferase PFA4 (456 aa).

Residues 1-9 (MAARNWSRV) are Cytoplasmic-facing. A helical transmembrane segment spans residues 10–30 (WVGGTVILISFIAFSSQIFVI). The Lumenal portion of the chain corresponds to 31-37 (WPWYGRE). A helical transmembrane segment spans residues 38-58 (ISLDLLMLLVPLNLAAFMIFW). At 59–138 (NYRLCVITSP…GNCVGFYNQG (80 aa)) the chain is on the cytoplasmic side. The region spanning 95–145 (RYCKNCAHYKPPRAHHCRQCKTCWLKLDHHCPWIGNCVGFYNQGHFIRFLL) is the DHHC domain. C125 functions as the S-palmitoyl cysteine intermediate in the catalytic mechanism. A helical transmembrane segment spans residues 139–159 (HFIRFLLWVDIGTTFHLIIMV). Residues 160–176 (RRVLYIAEYYHEPTLAD) are Lumenal-facing. Residues 177 to 197 (VLFLVFNFATCVPVWLCVGMF) traverse the membrane as a helical segment. Residues 198-456 (SIYHVYLACG…DPEEESGYTH (259 aa)) are Cytoplasmic-facing. The interval 284 to 377 (PPQDPSRLPN…YDHYDEGPMY (94 aa)) is disordered. Over residues 285–298 (PQDPSRLPNPPPIP) the composition is skewed to pro residues. Residues 309 to 321 (NGFNPNLRPTNSL) show a composition bias toward polar residues. The segment covering 337 to 352 (SHEQGRHYSSGDERDN) has biased composition (basic and acidic residues).

The protein belongs to the DHHC palmitoyltransferase family. PFA4 subfamily.

It is found in the endoplasmic reticulum membrane. It catalyses the reaction L-cysteinyl-[protein] + hexadecanoyl-CoA = S-hexadecanoyl-L-cysteinyl-[protein] + CoA. In terms of biological role, mediates the reversible addition of palmitate to target proteins, thereby regulating their membrane association and biological function. Responsible for the modification of a subset of proteins that are critical in cryptococcal pathogenesis, with substrates involved in cell wall synthesis, signal transduction, and membrane trafficking. Palmitoylates chitin synthase CHS3. This Cryptococcus neoformans var. grubii serotype A (strain H99 / ATCC 208821 / CBS 10515 / FGSC 9487) (Filobasidiella neoformans var. grubii) protein is Palmitoyltransferase PFA4.